Consider the following 181-residue polypeptide: MFKKFSKEDIHTRTKVKTSVQRSLKSKLVEQFPKLEEVIDELLPKKTELQIIKCSDKIQLYAVGDEVLFFQKFEELIPTLRFVHKYPEAFPTIQIDRGAIKFVLSGANIMCPGLTSSGAALPEAPGLAQDSIVVVNAENKENALAIGKLLMSTEDIKSINKGHGVETIHHLGDCLWNFSLV.

In terms of domain architecture, PUA spans 90 to 172; that stretch reads FPTIQIDRGA…HGVETIHHLG (83 aa).

This sequence belongs to the TMA20 family. In terms of assembly, associates with ribosomal complexes.

The protein localises to the cytoplasm. In terms of biological role, involved in translation. The polypeptide is Translation machinery-associated protein 20 (TMA20) (Eremothecium gossypii (strain ATCC 10895 / CBS 109.51 / FGSC 9923 / NRRL Y-1056) (Yeast)).